The primary structure comprises 498 residues: Guanosine-5'-triphosphate,3'-diphosphate pyrophosphatase (498 aa).

It belongs to the GppA/Ppx family. GppA subfamily.

The catalysed reaction is guanosine 3'-diphosphate 5'-triphosphate + H2O = guanosine 3',5'-bis(diphosphate) + phosphate + H(+). It functions in the pathway purine metabolism; ppGpp biosynthesis; ppGpp from GTP: step 2/2. Catalyzes the conversion of pppGpp to ppGpp. Guanosine pentaphosphate (pppGpp) is a cytoplasmic signaling molecule which together with ppGpp controls the 'stringent response', an adaptive process that allows bacteria to respond to amino acid starvation, resulting in the coordinated regulation of numerous cellular activities. The polypeptide is Guanosine-5'-triphosphate,3'-diphosphate pyrophosphatase (Pectobacterium atrosepticum (strain SCRI 1043 / ATCC BAA-672) (Erwinia carotovora subsp. atroseptica)).